Here is a 278-residue protein sequence, read N- to C-terminus: MGQKIHPTGFRLAVTRDWNSRWFASSGDYSRMLHEDLKVRDFLKKRLAHASVGRVVIERPAKNARITLFSARPGVVIGKKGEDIELLKRELQKIMGVPVHVNIEEVRKPEVDAKLIADSIAQQLEKRIMFRRAMKRAMQNAMRLGAQGIKIMSAGRLNGAEIARTEWYREGRVPLHTLRADIDYGVSEAKTTYGIIGIKVWVYKGEMLGRNERPAVVENENEARRGRRAPRNDAGDNRGAKRPARRTGAEQAGAGDKAGTRTRKAGVDDAAAVEKEVS.

The KH type-2 domain occupies 39–107 (VRDFLKKRLA…PVHVNIEEVR (69 aa)). The interval 217-278 (VENENEARRG…DAAAVEKEVS (62 aa)) is disordered. The segment covering 230–239 (PRNDAGDNRG) has biased composition (basic and acidic residues).

Belongs to the universal ribosomal protein uS3 family. As to quaternary structure, part of the 30S ribosomal subunit. Forms a tight complex with proteins S10 and S14.

Its function is as follows. Binds the lower part of the 30S subunit head. Binds mRNA in the 70S ribosome, positioning it for translation. The chain is Small ribosomal subunit protein uS3 from Aromatoleum aromaticum (strain DSM 19018 / LMG 30748 / EbN1) (Azoarcus sp. (strain EbN1)).